Consider the following 329-residue polypeptide: DNA-directed RNA polymerase subunit alpha (329 aa).

The segment at 1–235 (MQGSVTEFLK…EQLEAFVDLR (235 aa)) is alpha N-terminal domain (alpha-NTD). Residues 249–329 (FDPILLRPVD…NWPPASIADE (81 aa)) form an alpha C-terminal domain (alpha-CTD) region.

Belongs to the RNA polymerase alpha chain family. As to quaternary structure, homodimer. The RNAP catalytic core consists of 2 alpha, 1 beta, 1 beta' and 1 omega subunit. When a sigma factor is associated with the core the holoenzyme is formed, which can initiate transcription.

It carries out the reaction RNA(n) + a ribonucleoside 5'-triphosphate = RNA(n+1) + diphosphate. Its function is as follows. DNA-dependent RNA polymerase catalyzes the transcription of DNA into RNA using the four ribonucleoside triphosphates as substrates. This chain is DNA-directed RNA polymerase subunit alpha, found in Yersinia pestis bv. Antiqua (strain Antiqua).